Here is a 453-residue protein sequence, read N- to C-terminus: Bifunctional protein GlmU (453 aa).

The interval 1-228 is pyrophosphorylase; that stretch reads MPHWAAVIMA…VHEALGINSR (228 aa). UDP-N-acetyl-alpha-D-glucosamine contacts are provided by residues K23, Q73, 78 to 79, 100 to 102, G139, E153, N168, and N226; these read GT and SGD. Position 102 (D102) interacts with Mg(2+). Position 226 (N226) interacts with Mg(2+). Residues 229-249 form a linker region; it reads AQLAAAEDVARQRILSYWMEE. Residues 250 to 453 are N-acetyltransferase; the sequence is GVTIIDPRST…IENWVRNKKK (204 aa). Residues R331 and K349 each contribute to the UDP-N-acetyl-alpha-D-glucosamine site. H361 (proton acceptor) is an active-site residue. Residues Y364 and N375 each contribute to the UDP-N-acetyl-alpha-D-glucosamine site. Residues A378, 384-385, S403, A421, and R438 each bind acetyl-CoA; that span reads NY.

The protein in the N-terminal section; belongs to the N-acetylglucosamine-1-phosphate uridyltransferase family. In the C-terminal section; belongs to the transferase hexapeptide repeat family. Homotrimer. Mg(2+) serves as cofactor.

The protein localises to the cytoplasm. It catalyses the reaction alpha-D-glucosamine 1-phosphate + acetyl-CoA = N-acetyl-alpha-D-glucosamine 1-phosphate + CoA + H(+). The enzyme catalyses N-acetyl-alpha-D-glucosamine 1-phosphate + UTP + H(+) = UDP-N-acetyl-alpha-D-glucosamine + diphosphate. It participates in nucleotide-sugar biosynthesis; UDP-N-acetyl-alpha-D-glucosamine biosynthesis; N-acetyl-alpha-D-glucosamine 1-phosphate from alpha-D-glucosamine 6-phosphate (route II): step 2/2. It functions in the pathway nucleotide-sugar biosynthesis; UDP-N-acetyl-alpha-D-glucosamine biosynthesis; UDP-N-acetyl-alpha-D-glucosamine from N-acetyl-alpha-D-glucosamine 1-phosphate: step 1/1. The protein operates within bacterial outer membrane biogenesis; LPS lipid A biosynthesis. In terms of biological role, catalyzes the last two sequential reactions in the de novo biosynthetic pathway for UDP-N-acetylglucosamine (UDP-GlcNAc). The C-terminal domain catalyzes the transfer of acetyl group from acetyl coenzyme A to glucosamine-1-phosphate (GlcN-1-P) to produce N-acetylglucosamine-1-phosphate (GlcNAc-1-P), which is converted into UDP-GlcNAc by the transfer of uridine 5-monophosphate (from uridine 5-triphosphate), a reaction catalyzed by the N-terminal domain. The polypeptide is Bifunctional protein GlmU (Desulfitobacterium hafniense (strain Y51)).